A 189-amino-acid polypeptide reads, in one-letter code: Elongation factor P (189 aa).

Belongs to the elongation factor P family.

It localises to the cytoplasm. Its pathway is protein biosynthesis; polypeptide chain elongation. In terms of biological role, involved in peptide bond synthesis. Stimulates efficient translation and peptide-bond synthesis on native or reconstituted 70S ribosomes in vitro. Probably functions indirectly by altering the affinity of the ribosome for aminoacyl-tRNA, thus increasing their reactivity as acceptors for peptidyl transferase. In Sinorhizobium fredii (strain NBRC 101917 / NGR234), this protein is Elongation factor P.